The following is a 364-amino-acid chain: F-box protein At1g59680 (364 aa).

The F-box domain occupies 2–49 (TTMSDLSVDLVGEILSRVPLTSLSAVRCTCKSWNTLSKHQIFGKAELA).

This is F-box protein At1g59680 from Arabidopsis thaliana (Mouse-ear cress).